A 261-amino-acid polypeptide reads, in one-letter code: Sulfur carrier protein FdhD (261 aa).

C105 serves as the catalytic Cysteine persulfide intermediate. 245 to 250 serves as a coordination point for Mo-bis(molybdopterin guanine dinucleotide); that stretch reads FIRGDR.

It belongs to the FdhD family.

It localises to the cytoplasm. In terms of biological role, required for formate dehydrogenase (FDH) activity. Acts as a sulfur carrier protein that transfers sulfur from IscS to the molybdenum cofactor prior to its insertion into FDH. This chain is Sulfur carrier protein FdhD, found in Listeria monocytogenes serovar 1/2a (strain ATCC BAA-679 / EGD-e).